A 275-amino-acid polypeptide reads, in one-letter code: MNYSNPTQLQAAILDWAGTVVDFGSFAPTQIFVEAFAEFDVQVSIEEARGPMGMGKWDHIRTLCDVPEIAERYRKVFGRTPTDDDVTDIYNRFMPLQIEKIAVHSALIPGALDTLTGLRQDGLKIGSCSGYPKVVMDKVVELAAQNGYVADHVVATDETPNGRPWPAQALANVIALGIDDVAACVKVDDTVPGILEGRRAGMWTVALVCSGNALGLTWEGYQALSAEQLESERKRIHALFAGSRPHYLIDTINELPEVVADINRRLAKGEMPQAF.

Aspartate 15 functions as the Nucleophile in the catalytic mechanism. Residues aspartate 15 and alanine 17 each coordinate Mg(2+). Lysine 56 functions as the Schiff-base intermediate with substrate in the catalytic mechanism. Aspartate 189 is a binding site for Mg(2+).

Belongs to the HAD-like hydrolase superfamily. PhnX family. As to quaternary structure, homodimer. It depends on Mg(2+) as a cofactor.

It carries out the reaction phosphonoacetaldehyde + H2O = acetaldehyde + phosphate + H(+). In terms of biological role, involved in phosphonate degradation. The chain is Phosphonoacetaldehyde hydrolase from Pseudomonas putida (strain W619).